The primary structure comprises 358 residues: Sulfate/thiosulfate import ATP-binding protein CysA (358 aa).

Positions 3–237 constitute an ABC transporter domain; sequence IKIENLEKHF…PQTPFVTQFV (235 aa). 35 to 42 is a binding site for ATP; sequence GPSGCGKT.

The protein belongs to the ABC transporter superfamily. Sulfate/tungstate importer (TC 3.A.1.6) family. The complex is composed of two ATP-binding proteins (CysA), two transmembrane proteins (CysT and CysW) and a solute-binding protein (CysP).

It is found in the cell inner membrane. The enzyme catalyses sulfate(out) + ATP + H2O = sulfate(in) + ADP + phosphate + H(+). It carries out the reaction thiosulfate(out) + ATP + H2O = thiosulfate(in) + ADP + phosphate + H(+). Part of the ABC transporter complex CysAWTP involved in sulfate/thiosulfate import. Responsible for energy coupling to the transport system. The protein is Sulfate/thiosulfate import ATP-binding protein CysA of Mannheimia succiniciproducens (strain KCTC 0769BP / MBEL55E).